Consider the following 456-residue polypeptide: Glycerol-3-phosphate acyltransferase 4 (456 aa).

A signal peptide spans 1 to 37; that stretch reads MFLLLPFDSLIVNLLGISLTVLFTLLLVFIIVPAIFG. The next 2 helical transmembrane spans lie at 156–176 and 180–200; these read ISLR…CFLL and IALA…VGYL. A glycan (N-linked (GlcNAc...) asparagine) is linked at asparagine 247. Residues 248 to 253 carry the HXXXXD motif motif; that stretch reads HTSPID. N-linked (GlcNAc...) asparagine glycans are attached at residues asparagine 327, asparagine 328, and asparagine 362.

It belongs to the 1-acyl-sn-glycerol-3-phosphate acyltransferase family. In terms of tissue distribution, ubiquitous. High levels in testis. Relatively high level of expression in skeletal muscle and heart. Relatively low level of expression in lung.

It localises to the endoplasmic reticulum membrane. It catalyses the reaction sn-glycerol 3-phosphate + an acyl-CoA = a 1-acyl-sn-glycero-3-phosphate + CoA. The enzyme catalyses dodecanoyl-CoA + sn-glycerol 3-phosphate = 1-dodecanoyl-sn-glycerol 3-phosphate + CoA. The catalysed reaction is sn-glycerol 3-phosphate + hexadecanoyl-CoA = 1-hexadecanoyl-sn-glycero-3-phosphate + CoA. It carries out the reaction sn-glycerol 3-phosphate + octadecanoyl-CoA = 1-octadecanoyl-sn-glycero-3-phosphate + CoA. It catalyses the reaction sn-glycerol 3-phosphate + (9Z)-octadecenoyl-CoA = 1-(9Z-octadecenoyl)-sn-glycero-3-phosphate + CoA. The enzyme catalyses (9Z,12Z)-octadecadienoyl-CoA + sn-glycerol 3-phosphate = 1-(9Z,12Z)-octadecadienoyl-sn-glycero-3-phosphate + CoA. It functions in the pathway phospholipid metabolism; CDP-diacylglycerol biosynthesis; CDP-diacylglycerol from sn-glycerol 3-phosphate: step 1/3. Inhibited by N-ethylmaleimide (NEM). Functionally, converts glycerol-3-phosphate to 1-acyl-sn-glycerol-3-phosphate (lysophosphatidic acid or LPA) by incorporating an acyl moiety at the sn-1 position of the glycerol backbone. Active against both saturated and unsaturated long-chain fatty acyl-CoAs. Protects cells against lipotoxicity. The protein is Glycerol-3-phosphate acyltransferase 4 of Homo sapiens (Human).